Consider the following 312-residue polypeptide: MSSLRTADDTWDIATSVGSTAVMVAASRAAETERDEALIRDPYARLLVTGAGTGIWESVLDAKFVETVAAADAEAAAIFEHMISYQAVRTHFFDAFFTAAAEAGIRQIVILASGLDSRAYRLDWPSGTTVYEIDQPKVLEYKSATLAEHGVEPAATRREVGIDLRHDWPAALRGAGFDPSRPTAWLAEGLLMYLPADAQDRLFEQITELSAPGSRVAAETAGVQAEDRRQQMRERFERIAEKFDMTASLDIQQLIYEDPDRADVADWLDAHGWTATAVSSQQEMRRLDRWALPADLTDDDAFSNFVTAEKQS.

Residues Asp134 and 163–164 (DL) each bind S-adenosyl-L-methionine.

Belongs to the UPF0677 family.

In terms of biological role, exhibits S-adenosyl-L-methionine-dependent methyltransferase activity. The sequence is that of Putative S-adenosyl-L-methionine-dependent methyltransferase Mkms_0097 from Mycobacterium sp. (strain KMS).